A 712-amino-acid polypeptide reads, in one-letter code: Polyribonucleotide nucleotidyltransferase (712 aa).

The Mg(2+) site is built by Asp-487 and Asp-493. A KH domain is found at Pro-554–Ile-613. The 69-residue stretch at Gly-623–Lys-691 folds into the S1 motif domain.

Belongs to the polyribonucleotide nucleotidyltransferase family. It depends on Mg(2+) as a cofactor.

It localises to the cytoplasm. The enzyme catalyses RNA(n+1) + phosphate = RNA(n) + a ribonucleoside 5'-diphosphate. In terms of biological role, involved in mRNA degradation. Catalyzes the phosphorolysis of single-stranded polyribonucleotides processively in the 3'- to 5'-direction. The protein is Polyribonucleotide nucleotidyltransferase of Bacillus cereus (strain G9842).